A 952-amino-acid chain; its full sequence is MAIEEMEKKYRISDIARELQVSPQEVLQFVKLEGGKVASTSSMVDQGMRELIFGHFSNEKKMVDETMKIRQEKQRRLSRLEEQSRKTYEKERQLKETLHSASVAPAVHEEKKEPVVPEVRLVVSVPDELVSSEKVEEIEQIEQPVQLEQPVMAAQADQTDQTDQTDQADQADRTDQVIQTDQPVQEEPLEEVPAPKEMPVKEEPSVNEQLVSFETPKNIGGLTVIGTLDMHSPFDRSSEAERKKKNRKKNFKEQADALKSEFDTTVKEEVAADEKGAVKKKPAKPPGETNAATPAGTASTAGAQPLKKGKKKKKPDVNDKVISANIRTTISGMDDSGGTGSRQKFRKLRKIERERESEAAEAFRESQQMIVRVTEYASPHELADLMGVTAKDIIQKCFSLGKFVTINQRLDKESIELIALEFGFEAEFISEVEATAVLIEADEPEDMQIRPPVITIMGHVDHGKTSLLDYIRNSNVVAGESGGITQHIGAYEVTVESDRKITFLDTPGHEAFTAMRARGAQVTDIVILVVAADDSVMPQTIEAINHAKAAGVPIVVAINKVDKPEANPEKIKTQLSEAGVLVEEWGGEYQCQEISAKKGIGIAELMEKVLAEAEIRELKGNFSREINANGIIVESELDKGKGVISTVLVQRGFLKIGDPFVAGNTMGKIRALMDERGKRILFAGPSQPVRVLGFEELPQSGDVLTVMSSDRDARDLAQKRQVIRREHEFRRSTRVKLDSIARQIKEGLMKELSMIIKADTDGSIQALADGLMKIQNEEVKVQIIHQGVGQITETDVLLAAASDAIIIGFRVRPNVNAKKLAEKEDLDVRFYSVIYHVLEDVEKALEGMLSPELHEESLGSLEVRQVFRVPKVGNVGGCYMLEGKVFRDSKVRLLREGVQIYDGQLDALRRFKDDVKEVDAGYECGISLKNYDDIKVGDIVEAYRIVEKKRKL.

4 disordered regions span residues 74 to 95, 153 to 204, 230 to 256, and 273 to 319; these read QRRLSRLEEQSRKTYEKERQLK, AAQA…KEEP, MHSPFDRSSEAERKKKNRKKNFKEQAD, and DEKG…DVND. Low complexity predominate over residues 153-168; the sequence is AAQADQTDQTDQTDQA. A compositionally biased stretch (basic and acidic residues) spans 232–242; that stretch reads SPFDRSSEAER. Positions 286–303 are enriched in low complexity; it reads PGETNAATPAGTASTAGA. Positions 449–619 constitute a tr-type G domain; sequence IRPPVITIMG…LAEAEIRELK (171 aa). Residues 458–465 are G1; sequence GHVDHGKT. 458 to 465 contributes to the GTP binding site; that stretch reads GHVDHGKT. Residues 483–487 are G2; the sequence is GITQH. Positions 505 to 508 are G3; the sequence is DTPG. Residues 505–509 and 559–562 each bind GTP; these read DTPGH and NKVD. A G4 region spans residues 559 to 562; sequence NKVD. Residues 595-597 are G5; the sequence is SAK.

This sequence belongs to the TRAFAC class translation factor GTPase superfamily. Classic translation factor GTPase family. IF-2 subfamily.

It localises to the cytoplasm. In terms of biological role, one of the essential components for the initiation of protein synthesis. Protects formylmethionyl-tRNA from spontaneous hydrolysis and promotes its binding to the 30S ribosomal subunits. Also involved in the hydrolysis of GTP during the formation of the 70S ribosomal complex. The protein is Translation initiation factor IF-2 of Chlorobium limicola (strain DSM 245 / NBRC 103803 / 6330).